The sequence spans 227 residues: UPF0173 metal-dependent hydrolase SSO0099 (227 aa).

Belongs to the UPF0173 family.

This is UPF0173 metal-dependent hydrolase SSO0099 from Saccharolobus solfataricus (strain ATCC 35092 / DSM 1617 / JCM 11322 / P2) (Sulfolobus solfataricus).